Here is a 386-residue protein sequence, read N- to C-terminus: Na(+)/H(+) antiporter NhaA (386 aa).

11 helical membrane-spanning segments follow: residues 11–31 (NDAT…FLAN), 60–80 (LLLW…GLEV), 96–116 (MFPL…YAAF), 126–146 (GWAI…ALLG), 155–175 (MFLM…IALF), 180–200 (LSLI…VLNG), 218–238 (VAVL…GLFI), 260–280 (VSWL…LSGV), 293–313 (ITLG…WLAV), 326–346 (LIDI…SIFI), and 358–378 (LVTL…LVGY).

This sequence belongs to the NhaA Na(+)/H(+) (TC 2.A.33) antiporter family.

The protein localises to the cell inner membrane. It catalyses the reaction Na(+)(in) + 2 H(+)(out) = Na(+)(out) + 2 H(+)(in). Its function is as follows. Na(+)/H(+) antiporter that extrudes sodium in exchange for external protons. This chain is Na(+)/H(+) antiporter NhaA, found in Erwinia tasmaniensis (strain DSM 17950 / CFBP 7177 / CIP 109463 / NCPPB 4357 / Et1/99).